Reading from the N-terminus, the 493-residue chain is Glutamyl-tRNA(Gln) amidotransferase subunit A (493 aa).

Catalysis depends on charge relay system residues lysine 78 and serine 158. Serine 182 (acyl-ester intermediate) is an active-site residue.

Belongs to the amidase family. GatA subfamily. In terms of assembly, heterotrimer of A, B and C subunits.

It carries out the reaction L-glutamyl-tRNA(Gln) + L-glutamine + ATP + H2O = L-glutaminyl-tRNA(Gln) + L-glutamate + ADP + phosphate + H(+). In terms of biological role, allows the formation of correctly charged Gln-tRNA(Gln) through the transamidation of misacylated Glu-tRNA(Gln) in organisms which lack glutaminyl-tRNA synthetase. The reaction takes place in the presence of glutamine and ATP through an activated gamma-phospho-Glu-tRNA(Gln). This Methylorubrum extorquens (strain CM4 / NCIMB 13688) (Methylobacterium extorquens) protein is Glutamyl-tRNA(Gln) amidotransferase subunit A.